We begin with the raw amino-acid sequence, 427 residues long: 3-phosphoshikimate 1-carboxyvinyltransferase (427 aa).

Positions 20, 21, and 25 each coordinate 3-phosphoshikimate. Phosphoenolpyruvate is bound at residue Lys-20. 2 residues coordinate phosphoenolpyruvate: Gly-92 and Arg-120. Ser-166, Gln-168, Asp-312, and Lys-339 together coordinate 3-phosphoshikimate. A phosphoenolpyruvate-binding site is contributed by Gln-168. Residue Asp-312 is the Proton acceptor of the active site. Residues Arg-343 and Arg-385 each coordinate phosphoenolpyruvate.

It belongs to the EPSP synthase family. As to quaternary structure, monomer.

It localises to the cytoplasm. It catalyses the reaction 3-phosphoshikimate + phosphoenolpyruvate = 5-O-(1-carboxyvinyl)-3-phosphoshikimate + phosphate. The protein operates within metabolic intermediate biosynthesis; chorismate biosynthesis; chorismate from D-erythrose 4-phosphate and phosphoenolpyruvate: step 6/7. Catalyzes the transfer of the enolpyruvyl moiety of phosphoenolpyruvate (PEP) to the 5-hydroxyl of shikimate-3-phosphate (S3P) to produce enolpyruvyl shikimate-3-phosphate and inorganic phosphate. The protein is 3-phosphoshikimate 1-carboxyvinyltransferase of Streptococcus pyogenes serotype M4 (strain MGAS10750).